Reading from the N-terminus, the 381-residue chain is tRNA pseudouridine synthase D (381 aa).

Catalysis depends on D81, which acts as the Nucleophile. The TRUD domain maps to 160–335 (GMPNYFGPQR…TLGSRRFFWV (176 aa)).

Belongs to the pseudouridine synthase TruD family.

It catalyses the reaction uridine(13) in tRNA = pseudouridine(13) in tRNA. Functionally, responsible for synthesis of pseudouridine from uracil-13 in transfer RNAs. The sequence is that of tRNA pseudouridine synthase D from Helicobacter pylori (strain Shi470).